The primary structure comprises 939 residues: Aconitate hydratase A (939 aa).

Residues 433 to 453 (GSGESLATGAEGRPSKPVTVA) are disordered. 3 residues coordinate [4Fe-4S] cluster: C475, C541, and C544.

The protein belongs to the aconitase/IPM isomerase family. Monomer. [4Fe-4S] cluster serves as cofactor.

It carries out the reaction citrate = D-threo-isocitrate. The enzyme catalyses (2S,3R)-3-hydroxybutane-1,2,3-tricarboxylate = 2-methyl-cis-aconitate + H2O. Its pathway is carbohydrate metabolism; tricarboxylic acid cycle; isocitrate from oxaloacetate: step 2/2. It functions in the pathway organic acid metabolism; propanoate degradation. Functionally, involved in the catabolism of short chain fatty acids (SCFA) via the tricarboxylic acid (TCA)(acetyl degradation route) and probably via the 2-methylcitrate cycle I (propionate degradation route). Catalyzes the reversible isomerization of citrate to isocitrate via cis-aconitate. Could catalyze the hydration of 2-methyl-cis-aconitate to yield (2R,3S)-2-methylisocitrate. The apo form of AcnA functions as a RNA-binding regulatory protein. This chain is Aconitate hydratase A (acn), found in Corynebacterium glutamicum (strain ATCC 13032 / DSM 20300 / JCM 1318 / BCRC 11384 / CCUG 27702 / LMG 3730 / NBRC 12168 / NCIMB 10025 / NRRL B-2784 / 534).